Here is a 629-residue protein sequence, read N- to C-terminus: Smc-like protein Sph1 (629 aa).

2 coiled-coil regions span residues 139-282 (LETE…LLDD) and 318-487 (AETT…NQFD).

This sequence belongs to the Sph1/Sph2 family.

The protein localises to the cytoplasm. Functionally, may play a role in a late step of replication. The chain is Smc-like protein Sph1 (sph1) from Halobacterium salinarum (strain ATCC 29341 / DSM 671 / R1).